The primary structure comprises 308 residues: uncharacterized protein (308 aa).

The interval 19-43 (EPQASGAGPAQTPPPVTVPMTPPSK) is disordered. Residues 29-43 (QTPPPVTVPMTPPSK) are compositionally biased toward pro residues.

This is an uncharacterized protein from Deinococcus radiodurans (strain ATCC 13939 / DSM 20539 / JCM 16871 / CCUG 27074 / LMG 4051 / NBRC 15346 / NCIMB 9279 / VKM B-1422 / R1).